Here is a 209-residue protein sequence, read N- to C-terminus: Ephrin-A2 (209 aa).

An N-terminal signal peptide occupies residues 1–20 (MAPAQRPLLPLLLLLLPLRA). In terms of domain architecture, Ephrin RBD spans 30–170 (ADRYAVYWNR…RLKVYVRPTN (141 aa)). N-linked (GlcNAc...) asparagine glycosylation occurs at asparagine 38. 2 disulfides stabilise this stretch: cysteine 69/cysteine 110 and cysteine 98/cysteine 159. Asparagine 170 and asparagine 184 each carry an N-linked (GlcNAc...) asparagine glycan. A lipid anchor (GPI-anchor amidated asparagine) is attached at asparagine 184. Positions 185 to 209 (SSCSGLGGCHLFLTTVPVLWSLLGS) are cleaved as a propeptide — removed in mature form.

It belongs to the ephrin family. Binds to the receptor tyrosine kinases EPHA3, EPHA4 and EPHA5. Interacts with EPHA8; activates EPHA8. As to expression, expressed in myogenic progenitor cells.

The protein localises to the cell membrane. Cell surface GPI-bound ligand for Eph receptors, a family of receptor tyrosine kinases which are crucial for migration, repulsion and adhesion during neuronal, vascular and epithelial development. Binds promiscuously Eph receptors residing on adjacent cells, leading to contact-dependent bidirectional signaling into neighboring cells. The signaling pathway downstream of the receptor is referred to as forward signaling while the signaling pathway downstream of the ephrin ligand is referred to as reverse signaling. With the EPHA2 receptor may play a role in bone remodeling through regulation of osteoclastogenesis and osteoblastogenesis. The polypeptide is Ephrin-A2 (Efna2) (Mus musculus (Mouse)).